Reading from the N-terminus, the 266-residue chain is Integral membrane protein 2B (266 aa).

The Cytoplasmic segment spans residues 1 to 54 (MVKVTFNSALAQKEAKKDEPKSGEEALIIPPDAVAVDCKDPDDVVPVGQRRAWC). The chain crosses the membrane as a helical; Signal-anchor for type II membrane protein span at residues 55 to 75 (WCMCFGLAFMLAGVILGGAYL). Residues 76–266 (YKYFALQPDD…KFAVETLICS (191 aa)) lie on the Lumenal side of the membrane. The tract at residues 102–134 (EPSADAPAALYQTIEENIKIFEEEEVEFISVPV) is necessary for interaction with APP and inhibitor effects on APP processing. The BRICHOS domain maps to 137–231 (FADSDPANIV…LCHDKETYKL (95 aa)). Cystine bridges form between Cys-164-Cys-223 and Cys-248-Cys-265. Asn-170 is a glycosylation site (N-linked (GlcNAc...) asparagine).

The protein belongs to the ITM2 family. Homodimer; disulfide-linked. Interacts with SPPL2A and SPPL2B. Interacts with APP. Mature BRI2 (mBRI2) interacts with the APP amyloid-beta A4 protein; the interaction occurs at the cell surface and in the endocytic compartments and enable alpha- and beta-secretase-induced APP cleavage inhibition. Mature BRI2 (mBRI2) interacts with the APP C99; the interaction occurs in the endocytic compartments and enable gamma-secretase-induced C99 cleavage inhibition. May form heterodimers with Bri23 peptide and APP amyloid-beta protein 40. Interacts with ADAM7 in sperm; the interaction increases following capacitation. Post-translationally, the ectodomain C-terminal part of the imBRI2 is processed by furin producing a secreted Bri23 peptide and a mature BRI2, membrane form (mBRI2). The remaining part of the ectodomain of mBRI2 containing the BRICHOS domain is cleaved by ADAM10 and is secreted (BRI2C, soluble form). The membrane-bound N-terminal fragment (BRI2C, membrane form) is further proteolytically processed by SPPL2A and SPPL2B through regulated intramembrane proteolysis producing a secreted C-peptide and a BRI2 intracellular domain (BRI2 ICD) released in the cytosol. Shedding by ADAM10 facilitates intramembrane cleavage but is not absolutely required for BRI2 ICD generation. In terms of processing, glycosylation at Asn-170 is important for cell surface localization, but doesn't affect furin- and ADAM10-induced proteolytic processing. Ubiquitous. Expressed in brain.

It is found in the golgi apparatus membrane. The protein localises to the cell membrane. Its subcellular location is the endosome membrane. The protein resides in the secreted. Its function is as follows. Plays a regulatory role in the processing of the amyloid-beta A4 precursor protein (APP) and acts as an inhibitor of the amyloid-beta peptide aggregation and fibrils deposition. Plays a role in the induction of neurite outgrowth. Functions as a protease inhibitor by blocking access of secretases to APP cleavage sites. Functionally, mature BRI2 (mBRI2) functions as a modulator of the amyloid-beta A4 precursor protein (APP) processing leading to a strong reduction in the secretion of secretase-processed amyloid-beta protein 40 and amyloid-beta protein 42. Bri23 peptide prevents aggregation of APP amyloid-beta protein 42 into toxic oligomers. The sequence is that of Integral membrane protein 2B (ITM2B) from Homo sapiens (Human).